The sequence spans 277 residues: Large ribosomal subunit protein uL2 (277 aa).

A disordered region spans residues 216–277 (RRPHNRGVAM…IIRRRKVGKG (62 aa)).

It belongs to the universal ribosomal protein uL2 family. As to quaternary structure, part of the 50S ribosomal subunit. Forms a bridge to the 30S subunit in the 70S ribosome.

Its function is as follows. One of the primary rRNA binding proteins. Required for association of the 30S and 50S subunits to form the 70S ribosome, for tRNA binding and peptide bond formation. It has been suggested to have peptidyltransferase activity; this is somewhat controversial. Makes several contacts with the 16S rRNA in the 70S ribosome. The protein is Large ribosomal subunit protein uL2 of Acidiphilium cryptum (strain JF-5).